Reading from the N-terminus, the 210-residue chain is N-(5'-phosphoribosyl)anthranilate isomerase (210 aa).

It belongs to the TrpF family.

The catalysed reaction is N-(5-phospho-beta-D-ribosyl)anthranilate = 1-(2-carboxyphenylamino)-1-deoxy-D-ribulose 5-phosphate. Its pathway is amino-acid biosynthesis; L-tryptophan biosynthesis; L-tryptophan from chorismate: step 3/5. The protein is N-(5'-phosphoribosyl)anthranilate isomerase of Pseudomonas fluorescens (strain SBW25).